Consider the following 365-residue polypeptide: H-2 class I histocompatibility antigen, D-D alpha chain (365 aa).

Residues 1-24 form the signal peptide; the sequence is MGAMAPRTLLLLLAAALGPTQTRA. Residues 25–114 are alpha-1; the sequence is GSHSLRYFVT…ALRYYNQSAG (90 aa). Residues 25–311 lie on the Extracellular side of the membrane; that stretch reads GSHSLRYFVT…EPPSSTKTNT (287 aa). A glycan (N-linked (GlcNAc...) asparagine) is linked at Asn-110. The segment at 115–206 is alpha-2; sequence GSHTLQWMAG…KNGNATLLRT (92 aa). Residues Cys-125 and Cys-188 are joined by a disulfide bond. An N-linked (GlcNAc...) asparagine glycan is attached at Asn-200. An alpha-3 region spans residues 207-298; the sequence is DPPKAHVTHH…GLPEPLTLRW (92 aa). In terms of domain architecture, Ig-like C1-type spans 209–297; the sequence is PKAHVTHHRR…EGLPEPLTLR (89 aa). Cysteines 227 and 283 form a disulfide. The interval 299 to 311 is connecting peptide; sequence GKEEPPSSTKTNT. The helical transmembrane segment at 312 to 334 threads the bilayer; the sequence is VIIAVPVVLGAVVILGAVMAFVM. Residues 335–365 lie on the Cytoplasmic side of the membrane; that stretch reads KRRRNTGGKGGDYALAPGSQSSDMSLPDCKV. The disordered stretch occupies residues 343 to 365; it reads KGGDYALAPGSQSSDMSLPDCKV. 2 positions are modified to phosphoserine: Ser-356 and Ser-359.

Belongs to the MHC class I family. Heterodimer of an alpha chain and a beta chain (beta-2-microglobulin).

It localises to the membrane. Functionally, involved in the presentation of foreign antigens to the immune system. The polypeptide is H-2 class I histocompatibility antigen, D-D alpha chain (H2-D1) (Mus musculus (Mouse)).